The chain runs to 270 residues: Urease accessory protein UreD (270 aa).

Belongs to the UreD family. UreD, UreF and UreG form a complex that acts as a GTP-hydrolysis-dependent molecular chaperone, activating the urease apoprotein by helping to assemble the nickel containing metallocenter of UreC. The UreE protein probably delivers the nickel.

Its subcellular location is the cytoplasm. Its function is as follows. Required for maturation of urease via the functional incorporation of the urease nickel metallocenter. The polypeptide is Urease accessory protein UreD (Actinobacillus pleuropneumoniae serotype 7 (strain AP76)).